The sequence spans 585 residues: Efflux pump dotC (585 aa).

Basic and acidic residues predominate over residues 1 to 34; the sequence is MSEDHTKADNLSEKDPHSPERSDSSSHEDAHARE. The disordered stretch occupies residues 1–45; the sequence is MSEDHTKADNLSEKDPHSPERSDSSSHEDAHAREEEESSDDDGAL. N10 is a glycosylation site (N-linked (GlcNAc...) asparagine). Residues 35–44 show a composition bias toward acidic residues; sequence EEESSDDDGA. Residues 51–71 traverse the membrane as a helical segment; sequence SLIAIVMIALSLIGLQLAVFL. N-linked (GlcNAc...) asparagine glycosylation is present at N91. 13 helical membrane-spanning segments follow: residues 94-114, 132-152, 158-178, 186-206, 214-234, 247-267, 280-300, 323-343, 353-373, 385-405, 414-434, 449-471, and 524-544; these read AAYT…TPIW, ALFM…MLIT, GAAG…LFSL, GMIG…GGAF, WCFY…FFFL, FAAI…MFLF, SATV…FGLV, ALLV…YLPL, PILA…SAAA, LIPM…LINF, LIIY…APLV, TATF…QVLY, and SPMW…ILLV. Positions 564–585 are disordered; that stretch reads KKAEAERKAERQAKDLEKAQKS.

It belongs to the major facilitator superfamily. TCR/Tet family.

Its subcellular location is the cell membrane. The protein resides in the vacuole membrane. In terms of biological role, efflux pump; part of the gene cluster that mediates the biosynthesis of dothistromin (DOTH), a polyketide toxin very similar in structure to the aflatoxin precursor, versicolorin B. One function of dotC may be to transport early-stage dothistromin biosynthetic intermediates from the cytoplasm into vacuoles, thereby affecting the rate of dothistromin production. This is Efflux pump dotC from Dothistroma septosporum (Red band needle blight fungus).